The primary structure comprises 571 residues: Glutamate--tRNA ligase (571 aa).

A 'HIGH' region motif is present at residues 114–124; that stretch reads PNPNGPWHVGH. The disordered stretch occupies residues 431–453; that stretch reads KPLAGGPESASPPLHPNDEDRGR.

This sequence belongs to the class-I aminoacyl-tRNA synthetase family. Glutamate--tRNA ligase type 2 subfamily.

The protein localises to the cytoplasm. The catalysed reaction is tRNA(Glu) + L-glutamate + ATP = L-glutamyl-tRNA(Glu) + AMP + diphosphate. In terms of biological role, catalyzes the attachment of glutamate to tRNA(Glu) in a two-step reaction: glutamate is first activated by ATP to form Glu-AMP and then transferred to the acceptor end of tRNA(Glu). The polypeptide is Glutamate--tRNA ligase (Natronomonas pharaonis (strain ATCC 35678 / DSM 2160 / CIP 103997 / JCM 8858 / NBRC 14720 / NCIMB 2260 / Gabara) (Halobacterium pharaonis)).